The primary structure comprises 499 residues: L-asparagine permease (499 aa).

12 helical membrane passes run 34–54, 58–78, 109–129, 146–166, 171–191, 219–239, 264–284, 298–318, 353–373, 378–398, 422–442, and 448–468; these read QVQM…GAGA, MAGP…FFIL, VAGW…ITAV, VFAL…VKWF, FWFA…GTVF, LLPA…IEMV, IGLF…WSAY, LGVP…ALSS, YAGI…NYLV, FEIV…FIIV, APFT…LMAF, and TYTI…WFGV.

It belongs to the amino acid-polyamine-organocation (APC) superfamily. Amino acid transporter (AAT) (TC 2.A.3.1) family.

It is found in the cell inner membrane. This is L-asparagine permease (ansP) from Escherichia coli (strain K12).